We begin with the raw amino-acid sequence, 1069 residues long: MATQVMGQSSGGGSLFNNSGNMGMALPNDMYDLHDLSKAELAAPQLIMLANVALTGEVNGSCCDYLVGEERQMAELMPVGDNHFSDSEGEGLEESAELKGDPSGLDNMELRSLELSVVEPQPVFEASAAPEVYSSNKDPAPEAPVAEDKCKNLKAKPFRCKPCQYEAESEEQFVHHIRVHSAKKFFVEESAEKQAKARESGASPSEEGEFSKGPIRCDRCGYNTNRYDHYTAHLKHHLRAGDNERVYKCIICTYTTVSEYHWRKHLRNHFPRKVYTCSKCNYFSTEKNNYVQHVRTHTGERPYKCELCPYSSSQKTHLTRHMRTHSGEKPFKCDQCNYVASNQHEVTRHARQVHNGPKPLNCPHCDYKTADRSNFKKHVELHVNPRQFNCPVCDYAASKKCNLQYHFKSKHPTCPSKTMDVSKVKLKKTKRREADLHRDAAAAATEQTDTEQAKTKGVDASARRSERPVKGVGKDVPKEKKPCSNASVVQVTTRTRKSAVETKAAEGKHTDGQTGNNAEKSSKAKKSKRKMDAEAHPSVEPVTEGPVTKKKKTESKPKTSGEVPKGSRVEDRKADKQQSASIKKGGKKTALKTKTAKKGSKLAPKWVGHTEPSSEMAQGGESPVPALTQAVVTPSGSTQTELSSPMDIAQTEPAQMDVSQTGPPQVQRPLPVEPAQLEPSPPQEPPQVEPPACVEPPPPVEPPCPMEPAEMEPSPPMEPSQVEPPPHLEPPLPMELPQVELPPVEDCQKELPPVEHAQTKVAQTGPTQVGAVQEEPLFCLRATSSQANQKVISPKDRAKEKLSVLSEMARQEQVLIEVGLVPVRDSQLLKASKSAPDLPAPPSPLPKGHLRREETPKDQEMFSDGEGNKVSPLEKGGTEEAGESRAELAAPMESTSALSSEQSSNAPDGETLHSECQADSTAVCEMEVDTEQKTDRVPLKDSAVEPVSPLNPRVDPEAAAPAVVASPPITLAESQEIDEDEGIHSHDGSDLSDNMSEGSDDSGLHGARPAPQEATSKSGKEGLAVKVTEGEFVCIFCDRSFRKEKDYSKHLNRHLVNVYFLEEAAEEQE.

The interval 32-121 is interaction with SIN3A; it reads DLHDLSKAEL…SLELSVVEPQ (90 aa). The interval 43–57 is interaction with SIN3B; that stretch reads APQLIMLANVALTGE. Residues 85-104 form a disordered region; that stretch reads SDSEGEGLEESAELKGDPSG. Residues 144 to 417 are interaction with ZFP90; sequence PVAEDKCKNL…KSKHPTCPSK (274 aa). The C2H2-type 1 zinc finger occupies 158–180; it reads FRCKPCQYEAESEEQFVHHIRVH. Residues 200–211 form a required for binding to the neuron-restrictive silencer element region; it reads SGASPSEEGEFS. 7 consecutive C2H2-type zinc fingers follow at residues 215–237, 247–269, 275–297, 303–325, 331–354, 360–382, and 388–411; these read IRCD…LKHH, YKCI…LRNH, YTCS…VRTH, YKCE…MRTH, FKCD…RQVH, LNCP…VELH, and FNCP…KSKH. Disordered stretches follow at residues 425 to 737 and 830 to 1022; these read KLKK…MELP and KASK…GKEG. Positions 451–482 are enriched in basic and acidic residues; that stretch reads EQAKTKGVDASARRSERPVKGVGKDVPKEKKP. Over residues 484 to 493 the composition is skewed to polar residues; the sequence is SNASVVQVTT. Basic and acidic residues-rich tracts occupy residues 498–511 and 554–576; these read SAVE…KHTD and ESKP…KADK. The span at 584–600 shows a compositional bias: basic residues; it reads KGGKKTALKTKTAKKGS. Polar residues predominate over residues 630 to 643; that stretch reads AVVTPSGSTQTELS. 2 stretches are compositionally biased toward pro residues: residues 679-706 and 713-734; these read PSPP…PCPM and PSPP…PLPM. 2 stretches are compositionally biased toward basic and acidic residues: residues 851-860 and 876-886; these read RREETPKDQE and GGTEEAGESRA. Low complexity predominate over residues 894-904; it reads STSALSSEQSS. A compositionally biased stretch (basic and acidic residues) spans 930-943; sequence TEQKTDRVPLKDSA. Ser-948 is modified (phosphoserine). Positions 957–968 are enriched in low complexity; it reads EAAAPAVVASPP. The segment at 981–1059 is interaction with RCOR1; that stretch reads EGIHSHDGSD…HLNRHLVNVY (79 aa). The C2H2-type 9 zinc-finger motif lies at 1032–1054; it reads FVCIFCDRSFRKEKDYSKHLNRH.

In terms of assembly, isoform 1 and isoform 6 form heterodimers. Isoform 6: Forms homodimers and homooligomers; binds to the neuron-restrictive silencer element (NRSE) as monomer. Interacts with SIN3A, SIN3B and RCOR1. Interacts with CDYL. Interacts with EHMT1 and EHMT2 only in the presence of CDYL. Part of a complex containing at least CDYL, REST, WIZ, SETB1, EHMT1 and EHMT2. Interacts (via zinc-finger DNA-binding domain) with ZFP90 (via N- and C-termini); the interaction inhibits REST repressor activity. Interacts (via C2H2-type zinc finger 5) with PRICKLE1. Interacts with FBXW11 and BTRC. Interacts with USP7. In terms of processing, O-glycosylated. Post-translationally, phosphorylated; phosphorylation is required for ubiquitination. Ubiquitinated; ubiquitination is mediated by BTRC and leads to proteasomal degradation in G2 phase. Ubiquitination increases during neuronal differentiation. Deubiquitinated by USP7; leading to its stabilization and promoting the maintenance of neural progenitor cells. In terms of tissue distribution, expressed in the hippocampus including the granule cell layer of the dentate gyrus, the pyramidal cell layers of CA1 and CA3, the apical and basilar dendrite layers of the stratum radiatum and stratum oriens of CA1, the stratum lucidum and stratum oriens of CA3 and in astroglia (at protein level). Expressed in the brain, with the highest levels in the neurons of hippocampus, pons/medulla and midbrain.

Its subcellular location is the nucleus. It is found in the cytoplasm. Transcriptional repressor which binds neuron-restrictive silencer element (NRSE) and represses neuronal gene transcription in non-neuronal cells. Restricts the expression of neuronal genes by associating with two distinct corepressors, SIN3A and RCOR1, which in turn recruit histone deacetylase to the promoters of REST-regulated genes. Mediates repression by recruiting the BHC complex at RE1/NRSE sites which acts by deacetylating and demethylating specific sites on histones, thereby acting as a chromatin modifier. Transcriptional repression by REST-CDYL via the recruitment of histone methyltransferase EHMT2 may be important in transformation suppression. Represses the expression of SRRM4 in non-neural cells to prevent the activation of neural-specific splicing events and to prevent production of REST isoform 6. Repressor activity may be inhibited by forming heterodimers with isoform 6, thereby preventing binding to NRSE or binding to corepressors and leading to derepression of target genes. Also maintains repression of neuronal genes in neural stem cells, and allows transcription and differentiation into neurons by dissociation from RE1/NRSE sites of target genes. Thereby is involved in maintaining the quiescent state of adult hippocampal neural stem cells and preventing premature differentiation into mature neurons. Plays a role in the developmental switch in synaptic NMDA receptor composition during postnatal development, by repressing GRIN2B expression and thereby altering NMDA receptor properties from containing primarily GRIN2B to primarily GRIN2A subunits. Acts as a regulator of osteoblast differentiation. Key repressor of gene expression in hypoxia; represses genes in hypoxia by direct binding to an RE1/NRSE site on their promoter regions. May also function in stress resistance in the brain during aging; possibly by regulating expression of genes involved in cell death and in the stress response. Repressor of gene expression in the hippocampus after ischemia by directly binding to RE1/NRSE sites and recruiting SIN3A and RCOR1 to promoters of target genes, thereby promoting changes in chromatin modifications and ischemia-induced cell death. After ischemia, might play a role in repression of miR-132 expression in hippocampal neurons, thereby leading to neuronal cell death. In terms of biological role, binds to the 3' region of the neuron-restrictive silencer element (NRSE), with lower affinity than full-length REST isoform 1. Exhibits weaker repressor activity compared to isoform 1. May negatively regulate the repressor activity of isoform 1 by binding to isoform 1, thereby preventing its binding to NRSE and leading to derepression of target genes. However, in another study, does not appear to be implicated in repressor activity of a NRSE motif-containing reporter construct nor in inhibitory activity on the isoform 1 transcriptional repressor activity. Post-transcriptional inactivation of REST by SRRM4-dependent alternative splicing into isoform 6 is required in mechanosensory hair cells in the inner ear for derepression of neuronal genes and hearing. This Rattus norvegicus (Rat) protein is RE1-silencing transcription factor (Rest).